A 133-amino-acid polypeptide reads, in one-letter code: Probable mitochondrial pyruvate carrier 2 (133 aa).

3 consecutive transmembrane segments (helical) span residues 39–55, 73–91, and 99–116; these read VTNL…IVPI, ASSL…TLIS, and MLAA…YNIY.

Belongs to the mitochondrial pyruvate carrier (MPC) (TC 2.A.105) family.

Its subcellular location is the mitochondrion inner membrane. Functionally, may mediate the uptake of pyruvate into mitochondria. The chain is Probable mitochondrial pyruvate carrier 2 from Dictyostelium discoideum (Social amoeba).